The primary structure comprises 256 residues: Tryptophan synthase alpha chain (256 aa).

Active-site proton acceptor residues include glutamate 44 and aspartate 55.

It belongs to the TrpA family. As to quaternary structure, tetramer of two alpha and two beta chains.

The catalysed reaction is (1S,2R)-1-C-(indol-3-yl)glycerol 3-phosphate + L-serine = D-glyceraldehyde 3-phosphate + L-tryptophan + H2O. It functions in the pathway amino-acid biosynthesis; L-tryptophan biosynthesis; L-tryptophan from chorismate: step 5/5. The alpha subunit is responsible for the aldol cleavage of indoleglycerol phosphate to indole and glyceraldehyde 3-phosphate. The protein is Tryptophan synthase alpha chain of Coxiella burnetii (strain CbuK_Q154) (Coxiella burnetii (strain Q154)).